Here is a 607-residue protein sequence, read N- to C-terminus: V-type proton ATPase catalytic subunit A (607 aa).

Residue 251-258 participates in ATP binding; it reads GAFGCGKT.

It belongs to the ATPase alpha/beta chains family. In terms of assembly, V-ATPase is a heteromultimeric enzyme composed of a peripheral catalytic V1 complex (components A to H) attached to an integral membrane V0 proton pore complex (components: a, c, c', c'', d, e, f and VOA1).

It is found in the vacuole membrane. It catalyses the reaction ATP + H2O + 4 H(+)(in) = ADP + phosphate + 5 H(+)(out). Catalytic subunit of the V1 complex of vacuolar(H+)-ATPase (V-ATPase), a multisubunit enzyme composed of a peripheral complex (V1) that hydrolyzes ATP and a membrane integral complex (V0) that translocates protons. V-ATPase is responsible for acidifying and maintaining the pH of intracellular compartments. This is V-type proton ATPase catalytic subunit A (VMA1) from Encephalitozoon cuniculi (strain GB-M1) (Microsporidian parasite).